Here is a 591-residue protein sequence, read N- to C-terminus: UvrABC system protein C (591 aa).

Residues 14–91 (DSPGCYLHKD…IQKNMPKYNI (78 aa)) form the GIY-YIG domain. In terms of domain architecture, UVR spans 196–231 (DKIVTGLKEKMLAASQAMEFERAAEYRDLISGIATL).

Belongs to the UvrC family. Interacts with UvrB in an incision complex.

The protein resides in the cytoplasm. Functionally, the UvrABC repair system catalyzes the recognition and processing of DNA lesions. UvrC both incises the 5' and 3' sides of the lesion. The N-terminal half is responsible for the 3' incision and the C-terminal half is responsible for the 5' incision. In Streptococcus uberis (strain ATCC BAA-854 / 0140J), this protein is UvrABC system protein C.